Consider the following 154-residue polypeptide: Lipoprotein signal peptidase (154 aa).

The next 3 membrane-spanning stretches (helical) occupy residues 8–28 (LYLI…NYIV), 58–78 (IFSG…AVVI), and 88–108 (NGLF…NFID). Residues Asp117 and Asp133 contribute to the active site. A helical membrane pass occupies residues 131–151 (IADSAITVGIILVFIYLIFIS).

It belongs to the peptidase A8 family.

The protein resides in the cell membrane. The enzyme catalyses Release of signal peptides from bacterial membrane prolipoproteins. Hydrolyzes -Xaa-Yaa-Zaa-|-(S,diacylglyceryl)Cys-, in which Xaa is hydrophobic (preferably Leu), and Yaa (Ala or Ser) and Zaa (Gly or Ala) have small, neutral side chains.. Its pathway is protein modification; lipoprotein biosynthesis (signal peptide cleavage). In terms of biological role, this protein specifically catalyzes the removal of signal peptides from prolipoproteins. This chain is Lipoprotein signal peptidase, found in Lactobacillus johnsonii (strain CNCM I-12250 / La1 / NCC 533).